Here is a 1663-residue protein sequence, read N- to C-terminus: Kotanin synthase (1663 aa).

The tract at residues 19 to 168 is N-terminal acylcarrier protein transacylase domain (SAT); that stretch reads RPHEFSFNTQ…PLPVYGGPCH (150 aa). The 431-residue stretch at 301–731 folds into the Ketosynthase family 3 (KS3) domain; that stretch reads DSRIAVVGMS…GGNTSLLLEE (431 aa). Active-site for beta-ketoacyl synthase activity residues include cysteine 474, histidine 609, and histidine 650. A malonyl-CoA:ACP transacylase (MAT) domain region spans residues 830–1149; that stretch reads FIFSGQGSFY…SMCTLQETGV (320 aa). The product template (PT) domain stretch occupies residues 1209–1527; sequence TALVHQIMEE…PRILMNRFFD (319 aa). Residues 1213–1349 are N-terminal hotdog fold; sequence HQIMEESFRP…GVVRCGDRQS (137 aa). Residues 1213 to 1523 form the PKS/mFAS DH domain; sequence HQIMEESFRP…LRPLPRILMN (311 aa). The active-site Proton acceptor; for dehydratase activity is histidine 1245. Positions 1376-1523 are C-terminal hotdog fold; that stretch reads QASRVSRDLV…LRPLPRILMN (148 aa). Catalysis depends on aspartate 1434, which acts as the Proton donor; for dehydratase activity. Positions 1544–1580 are disordered; the sequence is DLPQVQHQPSPTTDSGPDDDPKDPNTGPLTPEVDLPV. The region spanning 1586–1663 is the Carrier domain; sequence KANTKLVRGA…ELKEYLTASW (78 aa). Serine 1623 carries the O-(pantetheine 4'-phosphoryl)serine modification.

Pantetheine 4'-phosphate serves as cofactor.

It functions in the pathway secondary metabolite biosynthesis. Functionally, non-reducing polyketide synthase; part of the gene cluster that mediates the biosynthesis of the bicoumarin kotanin. The non-reducing polyketide synthase ktnS first catalyzes the formation of the pentaketidic 4,7-dihydroxy-5-methylcoumarin from acetyl coenzyme A and 4 malonyl coenzyme A molecules. Further O-methylation by ktnB leads to the formation of 7-demethylsiderin. Then, an oxidative phenol coupling catalyzed by the cytochrome P450 monooxygenase ktnC forms the 8,8'-dimer P-orlandin via dimerization the monomeric precursor, 7-demethylsiderin. P-orlandin is subsequently O-methylated in a stepwise fashion to demethylkotanin and kotanin. In Aspergillus niger (strain ATCC MYA-4892 / CBS 513.88 / FGSC A1513), this protein is Kotanin synthase.